Here is a 101-residue protein sequence, read N- to C-terminus: NAD(P)H-quinone oxidoreductase subunit 4L, chloroplastic (101 aa).

3 helical membrane passes run 2-22 (YIEN…YGLL), 32-52 (MCLE…SNFI), and 61-81 (VIAI…LALV).

Belongs to the complex I subunit 4L family. As to quaternary structure, NDH is composed of at least 16 different subunits, 5 of which are encoded in the nucleus.

Its subcellular location is the plastid. It localises to the chloroplast thylakoid membrane. It catalyses the reaction a plastoquinone + NADH + (n+1) H(+)(in) = a plastoquinol + NAD(+) + n H(+)(out). The catalysed reaction is a plastoquinone + NADPH + (n+1) H(+)(in) = a plastoquinol + NADP(+) + n H(+)(out). NDH shuttles electrons from NAD(P)H:plastoquinone, via FMN and iron-sulfur (Fe-S) centers, to quinones in the photosynthetic chain and possibly in a chloroplast respiratory chain. The immediate electron acceptor for the enzyme in this species is believed to be plastoquinone. Couples the redox reaction to proton translocation, and thus conserves the redox energy in a proton gradient. The protein is NAD(P)H-quinone oxidoreductase subunit 4L, chloroplastic of Mesostigma viride (Green alga).